Consider the following 122-residue polypeptide: Large ribosomal subunit protein uL14 (122 aa).

It belongs to the universal ribosomal protein uL14 family. In terms of assembly, part of the 50S ribosomal subunit. Forms a cluster with proteins L3 and L19. In the 70S ribosome, L14 and L19 interact and together make contacts with the 16S rRNA in bridges B5 and B8.

In terms of biological role, binds to 23S rRNA. Forms part of two intersubunit bridges in the 70S ribosome. The polypeptide is Large ribosomal subunit protein uL14 (Nautilia profundicola (strain ATCC BAA-1463 / DSM 18972 / AmH)).